We begin with the raw amino-acid sequence, 173 residues long: Alpha-crystallin A chain (173 aa).

Methionine 1 carries the post-translational modification N-acetylmethionine. Residues 1-63 form a required for complex formation with BFSP1 and BFSP2 region; that stretch reads MDITIQHPWF…RTVLESGISE (63 aa). At glutamine 6 the chain carries Deamidated glutamine; partial. Residue serine 45 is modified to Phosphoserine. Glutamine 50 bears the Deamidated glutamine; partial mark. A sHSP domain is found at 52–164; it reads LFRTVLESGI…SDRSIPVSRE (113 aa). An N6-acetyllysine mark is found at lysine 70 and lysine 99. Residues histidine 100, glutamate 102, and histidine 107 each coordinate Zn(2+). Serine 122 carries the post-translational modification Phosphoserine. Residue asparagine 123 is modified to Deamidated asparagine; partial. A compositionally biased stretch (basic and acidic residues) spans 146–167; the sequence is IHSDMDASHSDRSIPVSREEKP. The tract at residues 146-173 is disordered; sequence IHSDMDASHSDRSIPVSREEKPTLAPSS. Residue histidine 154 participates in Zn(2+) binding. Serine 162 is a glycosylation site (O-linked (GlcNAc) serine).

Belongs to the small heat shock protein (HSP20) family. In terms of assembly, heteromer composed of three CRYAA and one CRYAB subunits. Inter-subunit bridging via zinc ions enhances stability, which is crucial as there is no protein turn over in the lens. Can also form homodimers and homotetramers (dimers of dimers) which serve as the building blocks of homooligomers. Within homooligomers, the zinc-binding motif is created from residues of 3 different molecules. His-100 and Glu-102 from one molecule are ligands of the zinc ion, and His-107 and His-154 residues from additional molecules complete the site with tetrahedral coordination geometry. Part of a complex required for lens intermediate filament formation composed of BFSP1, BFSP2 and CRYAA. Acetylation at Lys-70 may increase chaperone activity. Post-translationally, undergoes age-dependent proteolytical cleavage at the C-terminus.

Its subcellular location is the cytoplasm. It is found in the nucleus. Functionally, contributes to the transparency and refractive index of the lens. Acts as a chaperone, preventing aggregation of various proteins under a wide range of stress conditions. Required for the correct formation of lens intermediate filaments as part of a complex composed of BFSP1, BFSP2 and CRYAA. This is Alpha-crystallin A chain (CRYAA) from Osphranter rufus (Red kangaroo).